A 311-amino-acid polypeptide reads, in one-letter code: MMNKNSRLYTDSNIRNTFFAEIGIGVSANSLLLLFNIFKLICGQRSRLTDLPIGLLSLINLLMLLMTAFIATDTFISWRGWDDIICKSLLYLYRTFRGLSLCTSCLLSVLQAIILSPRSSCLAKFKHKPSHHISCAILSLSVLYMFISSHLLVSIIATPNLTTNDFIHVTQWCSILPMSYLMQSMFSTLLAIRDVFLISLMVLSTWYMVALLCRHRKQTRHLQGTSLSPKASPEQRATRSILMLMSLFVLMSVFDSIVCSSRTMYLNDPISYSYQLFMVHIYATVSPFVFIVTEKHIVNSLRSMCVKVMNV.

The Extracellular portion of the chain corresponds to 1–17 (MMNKNSRLYTDSNIRNT). The helical transmembrane segment at 18-38 (FFAEIGIGVSANSLLLLFNIF) threads the bilayer. At 39-50 (KLICGQRSRLTD) the chain is on the cytoplasmic side. The chain crosses the membrane as a helical span at residues 51–71 (LPIGLLSLINLLMLLMTAFIA). The Extracellular segment spans residues 72-94 (TDTFISWRGWDDIICKSLLYLYR). The cysteines at positions 86 and 173 are disulfide-linked. Residues 95 to 115 (TFRGLSLCTSCLLSVLQAIIL) traverse the membrane as a helical segment. The Cytoplasmic segment spans residues 116–135 (SPRSSCLAKFKHKPSHHISC). A helical membrane pass occupies residues 136-156 (AILSLSVLYMFISSHLLVSII). At 157–188 (ATPNLTTNDFIHVTQWCSILPMSYLMQSMFST) the chain is on the extracellular side. The N-linked (GlcNAc...) asparagine glycan is linked to N160. The chain crosses the membrane as a helical span at residues 189-209 (LLAIRDVFLISLMVLSTWYMV). The Cytoplasmic segment spans residues 210–239 (ALLCRHRKQTRHLQGTSLSPKASPEQRATR). Residues 240–260 (SILMLMSLFVLMSVFDSIVCS) form a helical membrane-spanning segment. Residues 261-271 (SRTMYLNDPIS) are Extracellular-facing. The chain crosses the membrane as a helical span at residues 272-292 (YSYQLFMVHIYATVSPFVFIV). Residues 293-311 (TEKHIVNSLRSMCVKVMNV) are Cytoplasmic-facing.

The protein belongs to the G-protein coupled receptor 1 family. In terms of tissue distribution, expressed in 1-4% of neurons of the vomeronasal organ. Only one pheromone receptor gene may be expressed in a particular neuron. Not expressed in the main olfactory epithelium.

The protein resides in the cell membrane. In terms of biological role, putative pheromone receptor implicated in the regulation of social as well as reproductive behavior. This Rattus norvegicus (Rat) protein is Vomeronasal type-1 receptor 105 (Vom1r105).